The primary structure comprises 1829 residues: MSAGGRDEERRKLADIIHHWNANRLDLFEISQPTEDLEFHGVMRFYFQDKAAGNFATKCIRVSSTATTQDVIETLAEKFRPDMRMLSSPKYSLYEVHVSGERRLDIDEKPLVVQLNWNKDDREGRFVLKNENDAIPAKKAQSNGPEKQEKEGVIQNFKRTLSKKEKKEKKKREKEALRQASDKEERPSQGDDSENSRLAAEVYKDMPETSFTRTISNPEVVMKRRRQQKLEKRMQEFRSSDGRPDSGGTLRIYADSLKPNIPYKTILLSTTDPADFAVAESLEKYGLEKENPKDYCIARVMLPPGAQHSDERGAKEIILDDDECPLQIFREWPSDKGILVFQLKRRPPDYIPKKMKKHVEGKPLKGKDRADGSGYGSALPPEKLPYLVELSPGRRNHFAYYSYHTYEDGSDSRDKPKLYRLQLSVTEVGTEKFDDNSIQLFGPGIQPHHCDLTNMDGVVTVTPRSMDAETYVDGQRISETTMLQSGMRLQFGTSHVFKFVDPIQDHVLSKRSVDGGLMVKGPRHKPGAVQETTFELGGDIHSGTALPASRSTTRLDSDRVSSASSTAERGMVKPMIRLDQEQDYRRRESRTQDAAGPELMLPASIEFRESSEDSFLSAIINYTNSSTVHFKLSPTYVLYMACRYVLSSQHRPDISPTERTHKAIAVVNKMVSMMEGVIQEVDQVDQKQKNIAGALAFWMANASELLNFIKQDRDLSRITLDAQDVLAHLVQMAFKYLVHCLQSELNNYMPAFLDDPEENSLQRPKIDDVLHTLTGAMSLLRRCRVNAALTIQLFSQLFHFINMWLFNRLVTDPDSGLCSHYWGAIIRQQLGHIEAWAEKQGLELAADCHLSRIVQATTLLTMDKYVPDDIPNINSTCFKLNSLQLQALLQNYHCAPDEPFIPTDLIENVVAVAENTADELARSDGRDVQLEEDPDLQLPFLLPEDGYSCDVVRNIPNGLQEFLDPLCQRGFCRLVPHTRSPGTWTIYFEGADYESHLMRENTELTQPLRKEPEVITVTLKKQNGMGLSIVAAKGAGQDKLGIYVKSVVKGGAADVDGRLAAGDQLLSVDGRSLVGLSQERAAELMTRTSSVVTLEVAKQGAIYHGLATLLNQPSPMMQRISDRRGSGKPRPKSEGFELYNNSAQNGSPESPQMPWTEYSEPKKLPGDDRLMKNRADHRSSPNVANQPPSPGGKSPYTSGTAAKITSVSTGNLCTEEQTPPPRPEAYPIPTQTYTREYFTFPASKSQDRMAPVQNQWPNYEEKPHMHTESDHASIAIQRVTRSQEELREEKVYQLERHRVESGMDRKCDSDMWINQSSSVESSTSSQEHLNHSSKSVTPASTLTKSGPGRWKTPAAVLPTPVAVSQPIRTDLPPPPPPPPAHYTSDFDGISMDLPLPPPPANQAAPQSAQVAAAERKKREEHQRWYEKEKARLEEERERKRREQERKLGQMRTQSLNPASFSPLATQAKPEKPSTLQRPQETVIRELQPQQQPRTIERRDLQYITISKEELSSGDSLSPDPWKRDAREKLEKQQQMHIVDMLSKEIHELQNKGDRTAEESDRLRKLMLEWQFQKRLQESKQKDEDDDEEEDDDVDTMLIMQRLEAERRARLQDEERRRQQQLEEMRKREVEDRVRQEEDGRHQEEERVKRDAEEKRRQEEGYYSRLEAERRRQHEEAARRLLEPEEPGLSRPPLPQDYEPPSQSSAPSAPPPPPQRNASYLKTQVLSPDSLFTAKFVAYDDDDEEENYVPAGPNSYSGSAGTTAGTYDAPRDTREKLSRSQDADLPGSSGAPENLTFRERQRLFSQGQDVSDKVKASRKLTELENELNTK.

The 95-residue stretch at 39–133 folds into the Ras-associating 1 domain; sequence FHGVMRFYFQ…GRFVLKNEND (95 aa). The interval 129-196 is disordered; sequence KNENDAIPAK…PSQGDDSENS (68 aa). The stretch at 146 to 186 forms a coiled coil; sequence EKQEKEGVIQNFKRTLSKKEKKEKKKREKEALRQASDKEER. Positions 160 to 172 are enriched in basic residues; that stretch reads TLSKKEKKEKKKR. Over residues 173-189 the composition is skewed to basic and acidic residues; sequence EKEALRQASDKEERPSQ. Phosphoserine occurs at positions 216, 246, and 256. The Ras-associating 2 domain maps to 246 to 348; the sequence is SGGTLRIYAD…LVFQLKRRPP (103 aa). The segment covering 356–371 has biased composition (basic and acidic residues); it reads KKHVEGKPLKGKDRAD. Positions 356–377 are disordered; it reads KKHVEGKPLKGKDRADGSGYGS. 2 positions are modified to phosphoserine: Ser-391 and Ser-424. The FHA domain maps to 441-507; the sequence is FGPGIQPHHC…KFVDPIQDHV (67 aa). Residues Ser-512, Ser-557, Ser-562, Ser-589, and Ser-655 each carry the phosphoserine modification. Residues 539–595 are disordered; the sequence is DIHSGTALPASRSTTRLDSDRVSSASSTAERGMVKPMIRLDQEQDYRRRESRTQDAA. Residues 576–591 show a composition bias toward basic and acidic residues; it reads IRLDQEQDYRRRESRT. The Dilute domain occupies 668–915; the sequence is NKMVSMMEGV…IENVVAVAEN (248 aa). Residues 1014 to 1100 enclose the PDZ domain; the sequence is VITVTLKKQN…VVTLEVAKQG (87 aa). Phosphoserine occurs at positions 1090, 1114, 1133, 1147, 1150, 1179, 1180, 1189, and 1206. The tract at residues 1114–1230 is disordered; that stretch reads SPMMQRISDR…PRPEAYPIPT (117 aa). Positions 1120–1135 are enriched in basic and acidic residues; it reads ISDRRGSGKPRPKSEG. Polar residues predominate over residues 1139-1150; sequence YNNSAQNGSPES. A compositionally biased stretch (basic and acidic residues) spans 1159 to 1179; that stretch reads SEPKKLPGDDRLMKNRADHRS. Polar residues predominate over residues 1195–1217; it reads PYTSGTAAKITSVSTGNLCTEEQ. Residues Thr-1218 and Thr-1239 each carry the phosphothreonine modification. Residues Ser-1245 and Ser-1282 each carry the phosphoserine modification. The segment covering 1300-1309 has biased composition (basic and acidic residues); it reads ESGMDRKCDS. Disordered stretches follow at residues 1300–1533 and 1574–1724; these read ESGM…EKQQ and RLQE…KTQV. Over residues 1316 to 1325 the composition is skewed to low complexity; the sequence is SSSVESSTSS. The span at 1332–1344 shows a compositional bias: polar residues; sequence SSKSVTPASTLTK. Ser-1335 is modified (phosphoserine). The residue at position 1337 (Thr-1337) is a Phosphothreonine. The segment covering 1371–1380 has biased composition (pro residues); the sequence is LPPPPPPPPA. Positions 1401–1412 are enriched in low complexity; that stretch reads NQAAPQSAQVAA. Over residues 1413-1447 the composition is skewed to basic and acidic residues; that stretch reads AERKKREEHQRWYEKEKARLEEERERKRREQERKL. Residues 1417–1454 are a coiled coil; it reads KREEHQRWYEKEKARLEEERERKRREQERKLGQMRTQS. The segment covering 1450 to 1464 has biased composition (polar residues); the sequence is MRTQSLNPASFSPLA. Residues 1494 to 1510 are compositionally biased toward basic and acidic residues; it reads TIERRDLQYITISKEEL. Residues Ser-1506 and Ser-1517 each carry the phosphoserine modification. The segment covering 1520 to 1533 has biased composition (basic and acidic residues); sequence PWKRDAREKLEKQQ. A coiled-coil region spans residues 1530–1564; that stretch reads EKQQQMHIVDMLSKEIHELQNKGDRTAEESDRLRK. Over residues 1583 to 1594 the composition is skewed to acidic residues; sequence EDDDEEEDDDVD. Positions 1600–1672 form a coiled coil; the sequence is QRLEAERRAR…SRLEAERRRQ (73 aa). Positions 1602 to 1682 are enriched in basic and acidic residues; sequence LEAERRARLQ…HEEAARRLLE (81 aa). Ser-1701 is subject to Phosphoserine. Residues 1715 to 1724 show a composition bias toward polar residues; it reads RNASYLKTQV. Ser-1726 is modified (phosphoserine). Residues 1742-1829 are disordered; the sequence is DEEENYVPAG…TELENELNTK (88 aa). The span at 1753 to 1764 shows a compositional bias: polar residues; the sequence is NSYSGSAGTTAG. A compositionally biased stretch (basic and acidic residues) spans 1768–1781; that stretch reads APRDTREKLSRSQD. A phosphoserine mark is found at Ser-1779 and Ser-1804. The segment covering 1809–1829 has biased composition (basic and acidic residues); the sequence is VSDKVKASRKLTELENELNTK. Residue Lys-1812 is modified to N6-acetyllysine.

In terms of assembly, homodimer. Interacts with F-actin, nectin and NECTIN3. Essential for the association of nectin and E-cadherin. Isoform 2/s-afadin does not interact with F-actin. Interacts with ZO-1 and occludin, but probably in an indirect manner. Interacts with RIT1, RIT2, NRXN1 and BCR. Interacts with ADAM10; the interaction locks ADAM10 at adherens junctions following ADAM10 recruitment to adherens junctions by TSPAN33. Isoform 1 is widely expressed, including in heart, brain, spleen, lung, liver, skeletal muscle, kidney and testis. Isoform 2 is mainly expressed in the brain.

It localises to the cell junction. The protein resides in the adherens junction. In terms of biological role, belongs to an adhesion system, probably together with the E-cadherin-catenin system, which plays a role in the organization of homotypic, interneuronal and heterotypic cell-cell adherens junctions (AJs). Nectin- and actin-filament-binding protein that connects nectin to the actin cytoskeleton. May play a key role in the organization of epithelial structures of the embryonic ectoderm. Essential for the organization of adherens junctions. The polypeptide is Afadin (Rattus norvegicus (Rat)).